The following is a 337-amino-acid chain: Ribosomal RNA small subunit methyltransferase H (337 aa).

S-adenosyl-L-methionine is bound by residues 45–47 (GGH), Asp64, Phe91, Asp120, and Gln127.

It belongs to the methyltransferase superfamily. RsmH family.

Its subcellular location is the cytoplasm. The enzyme catalyses cytidine(1402) in 16S rRNA + S-adenosyl-L-methionine = N(4)-methylcytidine(1402) in 16S rRNA + S-adenosyl-L-homocysteine + H(+). Specifically methylates the N4 position of cytidine in position 1402 (C1402) of 16S rRNA. This chain is Ribosomal RNA small subunit methyltransferase H, found in Corynebacterium glutamicum (strain ATCC 13032 / DSM 20300 / JCM 1318 / BCRC 11384 / CCUG 27702 / LMG 3730 / NBRC 12168 / NCIMB 10025 / NRRL B-2784 / 534).